We begin with the raw amino-acid sequence, 387 residues long: MATVIPSPLSLGEDFYREAIEHCRSYNARLCAERSLRLPFLDSQTGVAQNNCYIWMEKTHRGPGLAPGQIYTYPARCWRKKRRLNILEDPRLRPCEYKIDCEAPLKKEGGLPEGPVLEALLCAETGEKKVELKEEETIMDCQKQQLLEFPHDLEVEDLEEDIPRRKNRARGKAYGIGGLRKRQDTASLEDRDKPYVCDICGKRYKNRPGLSYHYTHTHLAEEEGEEHTERHALPFHRKNNHKQFYKELAWVPEAQRKHTAKKAPDGTVIPNGYCDFCLGGSKKTGCPEDLISCADCGRSGHPSCLQFTVNMTAAVRTYRWQCIECKSCSLCGTSENDDQLLFCDDCDRGYHMYCLSPPMAEPPEGSWSCHLCLRHLKEKASAYITLT.

Residues K106, K129, and K133 each participate in a glycyl lysine isopeptide (Lys-Gly) (interchain with G-Cter in SUMO2) cross-link. The C2H2-type zinc finger occupies Y195–H218. 2 consecutive PHD-type zinc fingers follow at residues N271–C328 and C325–H375. Zn(2+)-binding residues include C274, C277, C293, C296, H301, C304, C322, C325, C328, C331, C343, C346, H351, C354, C369, and C372.

Belongs to the requiem/DPF family. In terms of assembly, component of neuron-specific chromatin remodeling complex (nBAF complex) composed of at least, ARID1A/BAF250A or ARID1B/BAF250B, SMARCD1/BAF60A, SMARCD3/BAF60C, SMARCA2/BRM/BAF190B, SMARCA4/BRG1/BAF190A, SMARCB1/BAF47, SMARCC1/BAF155, SMARCE1/BAF57, SMARCC2/BAF170, DPF1/BAF45B, DPF3/BAF45C, ACTL6B/BAF53B and actin. As to expression, at embryonic stages, predominant expression in the nervous system. Expressed specifically in postmitotic neurons (at protein level).

The protein localises to the cytoplasm. The protein resides in the nucleus. Functionally, may have an important role in developing neurons by participating in regulation of cell survival, possibly as a neurospecific transcription factor. Belongs to the neuron-specific chromatin remodeling complex (nBAF complex). During neural development a switch from a stem/progenitor to a postmitotic chromatin remodeling mechanism occurs as neurons exit the cell cycle and become committed to their adult state. The transition from proliferating neural stem/progenitor cells to postmitotic neurons requires a switch in subunit composition of the npBAF and nBAF complexes. As neural progenitors exit mitosis and differentiate into neurons, npBAF complexes which contain ACTL6A/BAF53A and PHF10/BAF45A, are exchanged for homologous alternative ACTL6B/BAF53B and DPF1/BAF45B or DPF3/BAF45C subunits in neuron-specific complexes (nBAF). The npBAF complex is essential for the self-renewal/proliferative capacity of the multipotent neural stem cells. The nBAF complex along with CREST plays a role regulating the activity of genes essential for dendrite growth. This Mus musculus (Mouse) protein is Zinc finger protein neuro-d4.